A 306-amino-acid polypeptide reads, in one-letter code: Diterpene cyclase eriG (306 aa).

The next 2 membrane-spanning stretches (helical) occupy residues 13-33 and 43-63; these read IFFG…SIFA and ATLV…IYFF. An N-linked (GlcNAc...) asparagine glycan is attached at Asn64. 4 helical membrane passes run 115 to 135, 161 to 181, 213 to 233, and 265 to 285; these read FLPE…TSYG, IAPA…WAGL, LIIT…AGIF, and MFYT…GLGL.

The protein belongs to the UbiA prenyltransferase family. The cofactor is Mg(2+).

The protein localises to the membrane. It catalyses the reaction (2E,6E,10E)-geranylgeranyl diphosphate = (-)-cyatha-3,12-diene + diphosphate. It participates in secondary metabolite biosynthesis. With respect to regulation, EDTA completely blocks the reaction. Diterpene cyclase; part of the gene cluster that mediates the biosynthesis of erinacines, cyathane-xylosides that show unique biological activities, including leishmanicidal activity, stimulating activity for nerve growth-factor synthesis, and agonistic activity toward the kappa opioid receptor. Within the pathway, eriG acts as a diterpene cyclase that converts geranylgeranyl diphosphate (GGPP) into cyatha-3,12-diene. EriG is unable to use geranyl diphosphate (GPP) or farnesyl diphosphate (FPP) as substrates. The first step of the erinacines biosynthesis pathway is catalyzed by the geranylgeranyl diphosphate (GGPP) synthase eriE via conversion of farnesyl pyrophosphate and isopentyl pyrophosphate into geranylgeranyl pyrophosphate (GGPP). GGPP is then substrate of the diterpene cyclase eriG for the production of cyatha-3,12-diene. The cytochrome P450 monooxygenase eriI then hydroxylates cyatha-3,12-diene at C-14 of the seven-membered ring to produce erinacol, which is further hydroxylated at C-15 by the cytochrome P450 monooxygenase eriC to yield cyathadiol. The cytochrome P450 monooxygenase eriA then catalyzes C-11 hydroxylation in the presence of the short chain dehydrogenase/reductase (SDR) eriH, which leads to the production of cyathatriol. The acetyltransferase eriL converts cyathatriol into 11-O-acetyl-cyathatriol. The SDR eriH catalyzes further oxidation of 11-O-acetyl-cyathatriol into 1-O-acetylcyathin A3. Finally, the glycosyl transferase eriJ tranfers xylose from UDP-xylose onto C-14 of 11-O-acetyl-cyathatriol to form eracine Q. EriJ is also able to convert 11-O-acetyl-cyathatriol to eracine Q2 by using UDP-D-glucose as cosubstrate, but at a lower rate. The polypeptide is Diterpene cyclase eriG (Hericium erinaceus (Lion's mane mushroom)).